The sequence spans 98 residues: NADH-ubiquinone oxidoreductase chain 4L (98 aa).

3 helical membrane-spanning segments follow: residues 1-21 (MSMV…GLLM), 29-49 (SLLC…VTIL), and 61-81 (IILL…LVMV).

Belongs to the complex I subunit 4L family. Core subunit of respiratory chain NADH dehydrogenase (Complex I) which is composed of 45 different subunits.

It is found in the mitochondrion inner membrane. It catalyses the reaction a ubiquinone + NADH + 5 H(+)(in) = a ubiquinol + NAD(+) + 4 H(+)(out). Functionally, core subunit of the mitochondrial membrane respiratory chain NADH dehydrogenase (Complex I) which catalyzes electron transfer from NADH through the respiratory chain, using ubiquinone as an electron acceptor. Part of the enzyme membrane arm which is embedded in the lipid bilayer and involved in proton translocation. This is NADH-ubiquinone oxidoreductase chain 4L (MT-ND4L) from Erignathus barbatus (Bearded seal).